The following is a 274-amino-acid chain: 4-hydroxy-tetrahydrodipicolinate reductase (274 aa).

12-17 serves as a coordination point for NAD(+); it reads GAAGRM. Arg-39 is a binding site for NADP(+). Residues 102–104 and 126–129 contribute to the NAD(+) site; these read GTT and SGNM. His-160 functions as the Proton donor/acceptor in the catalytic mechanism. Residue His-161 coordinates (S)-2,3,4,5-tetrahydrodipicolinate. Lys-164 serves as the catalytic Proton donor. 170–171 is a binding site for (S)-2,3,4,5-tetrahydrodipicolinate; the sequence is GT.

The protein belongs to the DapB family.

The protein resides in the cytoplasm. It carries out the reaction (S)-2,3,4,5-tetrahydrodipicolinate + NAD(+) + H2O = (2S,4S)-4-hydroxy-2,3,4,5-tetrahydrodipicolinate + NADH + H(+). The enzyme catalyses (S)-2,3,4,5-tetrahydrodipicolinate + NADP(+) + H2O = (2S,4S)-4-hydroxy-2,3,4,5-tetrahydrodipicolinate + NADPH + H(+). It functions in the pathway amino-acid biosynthesis; L-lysine biosynthesis via DAP pathway; (S)-tetrahydrodipicolinate from L-aspartate: step 4/4. Catalyzes the conversion of 4-hydroxy-tetrahydrodipicolinate (HTPA) to tetrahydrodipicolinate. The chain is 4-hydroxy-tetrahydrodipicolinate reductase from Rhizobium rhizogenes (strain K84 / ATCC BAA-868) (Agrobacterium radiobacter).